Reading from the N-terminus, the 743-residue chain is MKFYSSHPMPESLAAAIAVPLLGLLPAAQAASTAVQLPSVTVEGEYSSYQPESAQSPKFTAPLADTPRTVQVIPERLIQDQGASDLEAVLRNAPGISMTAGEGGRPASDLPFIRGQNSASSLFVDGLRDPSTQSRDTFNLEQVDVVKGPDSVFSGRGGAGGSINLVTKTPRNQDFTEVQAGIGTAETYRGTIDGNWVLGENTALRLNLLGTRDTVPGRDKAVEFSRVGIAPSLRLGLSGPTRVTLGLYHYRHRRVPDYSIPYDPRTGTPITETIGVSRRNFYGLVRRDSGDTEDYAATVKWEHDLANGFKVENLARYSRATVEQITTMPELKTADLAKGLVYRNLRASYQVNDSFANRTDLRGTFDTGQWRHTFDLGGEFATSRRSRDRYKQEIPDAASPCSPVTDGNNPALCASLRDPDPHVDFPGTVRRNHNPARYHTDILSLYGFDTIAFDEQWQLNLGLRWDHYKTSGRNLPVRGAKPPVYERAARTDNLFNYQLGLVYKPRPDGSVYASYGTASTPSAVSDYAPADSISGTSQQLKPERSEAIEIGTKWQVLDRRLLVTGAMFRETRKNTSIEVAEGLRAPAGKSRVTGMELGVAGSLTPRWDVYGGYALLDSKLVRASHKSGAQGQPLPSAPRHAFSIWSTYKLLPELTVGAGAFYRSKVYGNADAGYNKDGTPKARWVPAYWRFDAMAAYQLNKHLTAQLNVYNLLDKTYYAKTYRSHYAALGPGRSAMLTFKLSY.

Positions 1–30 are cleaved as a signal peptide; that stretch reads MKFYSSHPMPESLAAAIAVPLLGLLPAAQA. Residues 62-168 form the TBDR plug domain; it reads PLADTPRTVQ…AGGSINLVTK (107 aa). Positions 173 to 743 constitute a TBDR beta-barrel domain; that stretch reads QDFTEVQAGI…SAMLTFKLSY (571 aa). The short motif at 726–743 is the TonB C-terminal box element; that stretch reads YAALGPGRSAMLTFKLSY.

Belongs to the TonB-dependent receptor family.

The protein resides in the cell outer membrane. In terms of biological role, probably involved in iron transport. This chain is Probable TonB-dependent receptor BfrD (bfrD), found in Bordetella pertussis (strain Tohama I / ATCC BAA-589 / NCTC 13251).